The primary structure comprises 65 residues: Large ribosomal subunit protein bL35 (65 aa).

The protein belongs to the bacterial ribosomal protein bL35 family.

The chain is Large ribosomal subunit protein bL35 from Phytoplasma mali (strain AT).